A 124-amino-acid chain; its full sequence is Histone H2A, embryonic (124 aa).

Basic residues predominate over residues 1-18 (MSGRGKSGKARTKAKTRS). Positions 1-21 (MSGRGKSGKARTKAKTRSSRA) are disordered. Ser2 carries the N-acetylserine modification. Ser2 carries the phosphoserine modification. Gln104 bears the N5-methylglutamine mark. A Glycyl lysine isopeptide (Lys-Gly) (interchain with G-Cter in ubiquitin) cross-link involves residue Lys119.

It belongs to the histone H2A family. The nucleosome is a histone octamer containing two molecules each of H2A, H2B, H3 and H4 assembled in one H3-H4 heterotetramer and two H2A-H2B heterodimers. The octamer wraps approximately 147 bp of DNA. Monoubiquitination of Lys-119 gives a specific tag for epigenetic transcriptional repression. In terms of processing, phosphorylation of Ser-2 directly represses transcription.

Its subcellular location is the nucleus. It localises to the chromosome. Core component of nucleosome. Nucleosomes wrap and compact DNA into chromatin, limiting DNA accessibility to the cellular machineries which require DNA as a template. Histones thereby play a central role in transcription regulation, DNA repair, DNA replication and chromosomal stability. DNA accessibility is regulated via a complex set of post-translational modifications of histones, also called histone code, and nucleosome remodeling. This Psammechinus miliaris (Green sea urchin) protein is Histone H2A, embryonic.